Reading from the N-terminus, the 312-residue chain is Ribosomal protein L11 methyltransferase (312 aa).

T160, G181, D203, and N246 together coordinate S-adenosyl-L-methionine.

It belongs to the methyltransferase superfamily. PrmA family.

The protein resides in the cytoplasm. The catalysed reaction is L-lysyl-[protein] + 3 S-adenosyl-L-methionine = N(6),N(6),N(6)-trimethyl-L-lysyl-[protein] + 3 S-adenosyl-L-homocysteine + 3 H(+). Its function is as follows. Methylates ribosomal protein L11. The chain is Ribosomal protein L11 methyltransferase from Staphylococcus aureus (strain bovine RF122 / ET3-1).